The primary structure comprises 530 residues: MLLSSAFVGSCLAILNFAAAVSAQGGLSRTTLNIVNKVISPDGYSRDSVLANGIHPGPLISGNKGDTFQINVNNQLHDNSMNTSTTVHWHGIDQHHTNWADGPAFVTQCPIVPEHSFLYNFTVPDQAGTFWYHSHESVQYCDGLRGPLVVYDPEDPHKDLYDVDDDTTIISLSDWYHSPAHELLPGPIPPNSTLINSLGRPDGSDLPVTIIEVDPTKRYRFRLISMACHPYFDFSIDGHNMTIIEADGSNTEPLSDIDQIRIYPAQRYSFVLEPNQTPGDYWIRAAPLQLGNTSNPDTTTSLGLAILRYTNRSGYAQAASVDPYDISQTPIPVNPLLEQNLHAYGDVPELDEECDDCKLTFDFAFNFTAVDFTVNGTSYVNPTVPVLLQILNGTYTAQELLPHHSVYTLPRNKTIEITMPGAVTGGPHPMHLHGHSFYVIQSMGSDTTNTVNPVLRDTVAVGGATGDNVVIRFRTDNPGPWIMHCHIDFHLALGFAVVLAEAPQDVAEYVSPIPTWDELCPIWDNAPSHN.

An N-terminal signal peptide occupies residues 1–23; it reads MLLSSAFVGSCLAILNFAAAVSA. 2 Plastocyanin-like domains span residues 36-154 and 167-311; these read NKVI…YDPE and TTII…RYTN. Residue N82 is glycosylated (N-linked (GlcNAc...) asparagine). Cu cation is bound by residues H88 and H90. 2 disulfides stabilise this stretch: C109/C520 and C141/C228. N-linked (GlcNAc...) asparagine glycosylation is present at N120. Cu cation contacts are provided by H133 and H135. N-linked (GlcNAc...) asparagine glycans are attached at residues N191, N240, N292, N311, N366, N375, N392, and N412. The 126-residue stretch at 379–504 folds into the Plastocyanin-like 3 domain; that stretch reads YVNPTVPVLL…FAVVLAEAPQ (126 aa). Positions 428, 431, 433, 484, 485, 486, and 490 each coordinate Cu cation.

The protein belongs to the multicopper oxidase family. Requires Cu cation as cofactor.

The protein localises to the secreted. It carries out the reaction 4 hydroquinone + O2 = 4 benzosemiquinone + 2 H2O. With respect to regulation, inhibited by chloride ions. Inhibited by citrate. Inhibited by oxalate. Activated by acetate. Functionally, in vitro, has activity towards 2,2'-azino-bis(3-ethylbenzthiazoline-6-sulfonic acid) (ABTS), 2,6-dimethoxy-phenol, and guaiacol. Although brown rot fungi preferentially degrade hemicellulose and cellulose, the enzyme may contribute to generating small amounts of lignin breakdown products required for catalytic reactions. This Fomitopsis schrenkii (Brown rot fungus) protein is Laccase-2.